The primary structure comprises 67 residues: Beta-defensin 9 (67 aa).

Residues 1-24 (MRTLCSLLLICCLLFSYTTPAANS) form the signal peptide. Cystine bridges form between Cys-34/Cys-62, Cys-41/Cys-55, and Cys-45/Cys-63.

The protein belongs to the beta-defensin family. As to expression, weakly expressed in adult and neonatal brain.

It localises to the secreted. Its function is as follows. Has antibacterial activity. This is Beta-defensin 9 (Defb9) from Mus musculus (Mouse).